A 355-amino-acid polypeptide reads, in one-letter code: Putative cyclin-A3-1 (355 aa).

It belongs to the cyclin family. Cyclin AB subfamily.

The chain is Putative cyclin-A3-1 (CYCA3-1) from Arabidopsis thaliana (Mouse-ear cress).